Reading from the N-terminus, the 431-residue chain is Protein translocase subunit SecY (431 aa).

The Cytoplasmic portion of the chain corresponds to 1–17 (MFKTISNFMRVSDIRNK). Residues 18–38 (IIFTLLMLIVFRIGAFIPVPY) traverse the membrane as a helical segment. Residues 39-66 (VNAEALQAQSQMGVFDLLNTFGGGALYQ) are Extracellular-facing. Residues 67-87 (FSIFAMGITPYITASIIIQLL) form a helical membrane-spanning segment. Over 88 to 115 (QMDVVPKFTEWSKQGEVGRRKLAQFTRY) the chain is Cytoplasmic. A helical membrane pass occupies residues 116 to 136 (FTIVLGFIQALGMSYGFNNLA). The Extracellular portion of the chain corresponds to 137–145 (NGMLIEKSG). A helical membrane pass occupies residues 146-166 (VSTYLIIALVLTGGTAFLMWL). Over 167 to 177 (GEQITSHGVGN) the chain is Cytoplasmic. The chain crosses the membrane as a helical span at residues 178–198 (GISIIIFAGIVSSIPKTIGQI). At 199–213 (YETQFVGSNDQLFIH) the chain is on the extracellular side. The helical transmembrane segment at 214-234 (IVKVALLVIAILAVIVGVIFI) threads the bilayer. Residues 235-261 (QQAVRKIAIQYAKGTGRSPAGGGQSTH) lie on the Cytoplasmic side of the membrane. A helical transmembrane segment spans residues 262 to 282 (LPLKVNPAGVIPVIFAVAFLI). Residues 283-308 (TPRTIASFFGTNDVTKWIQNNFDNTH) are Extracellular-facing. Residues 309–329 (PVGMAIYVALIIAFTYFYAFV) traverse the membrane as a helical segment. Residues 330-368 (QVNPEQMADNLKKQGGYIPGVRPGKMTQDRITSILYRLT) lie on the Cytoplasmic side of the membrane. 2 helical membrane-spanning segments follow: residues 369 to 389 (FVGS…IQFA) and 390 to 410 (GLPQ…GVAL). The Cytoplasmic segment spans residues 411–431 (ETMKQLESQLVKRNYRGFMKN).

This sequence belongs to the SecY/SEC61-alpha family. Component of the Sec protein translocase complex. Heterotrimer consisting of SecY, SecE and SecG subunits. The heterotrimers can form oligomers, although 1 heterotrimer is thought to be able to translocate proteins. Interacts with the ribosome. Interacts with SecDF, and other proteins may be involved. Interacts with SecA. Interacts with FloT.

It localises to the cell membrane. Its subcellular location is the membrane raft. In terms of biological role, the central subunit of the protein translocation channel SecYEG. Consists of two halves formed by TMs 1-5 and 6-10. These two domains form a lateral gate at the front which open onto the bilayer between TMs 2 and 7, and are clamped together by SecE at the back. The channel is closed by both a pore ring composed of hydrophobic SecY resides and a short helix (helix 2A) on the extracellular side of the membrane which forms a plug. The plug probably moves laterally to allow the channel to open. The ring and the pore may move independently. The protein is Protein translocase subunit SecY of Bacillus subtilis (strain 168).